The chain runs to 931 residues: Neuropilin-2 (931 aa).

A signal peptide (or 22) is located at residues 1–20; sequence MDMFPLTWVFLALYFSRHQV. Over 21-864 the chain is Extracellular; sequence RGQPDPPCGG…EKSWLYTLDP (844 aa). 3 cysteine pairs are disulfide-bonded: cysteine 28-cysteine 55, cysteine 83-cysteine 105, and cysteine 149-cysteine 175. CUB domains lie at 28 to 142 and 149 to 267; these read CGGR…YEIF and CSKN…YYLV. N-linked (GlcNAc...) asparagine glycans are attached at residues asparagine 152 and asparagine 157. Ca(2+) contacts are provided by glutamate 197, aspartate 211, and aspartate 252. An intrachain disulfide couples cysteine 208 to cysteine 230. Disulfide bonds link cysteine 277-cysteine 427 and cysteine 434-cysteine 592. F5/8 type C domains are found at residues 277-427 and 434-592; these read CNVP…LFGC and CSNM…VLGC. Polar residues predominate over residues 298–310; it reads TYSDGRWTPQQSR. The interval 298–317 is disordered; the sequence is TYSDGRWTPQQSRLHGDDNG. The disordered stretch occupies residues 601 to 622; sequence VETLGPTVKSEETTTPYPTEEE. Asparagine 629 carries an N-linked (GlcNAc...) asparagine glycan. Positions 642-802 constitute an MAM domain; that stretch reads SGFNCNFDFL…TDVPLENCME (161 aa). Asparagine 839 carries an N-linked (GlcNAc...) asparagine glycan. The helical transmembrane segment at 865 to 889 threads the bilayer; the sequence is ILITIIAMSSLGVLLGATCAGLLLY. The Cytoplasmic portion of the chain corresponds to 890-931; sequence CTCSYSGLSSRSCTTLENYNFELYDGLKHKVKMNHQKCCSEA.

It belongs to the neuropilin family. Heterodimer with NRP1. Binds PLXNB1. In terms of assembly, (Microbial infection) Interacts with human cytomegalovirus proteins gL, UL128, UL130 and UL131A.

The protein resides in the membrane. It is found in the secreted. In terms of biological role, high affinity receptor for semaphorins 3C, 3F, VEGF-165 and VEGF-145 isoforms of VEGF, and the PLGF-2 isoform of PGF. Its function is as follows. (Microbial infection) Acts as a receptor for human cytomegalovirus pentamer-dependent entry in epithelial and endothelial cells. This chain is Neuropilin-2 (NRP2), found in Homo sapiens (Human).